We begin with the raw amino-acid sequence, 41 residues long: SDRASDGRNAAANDRASDLVALTVRGCCTYPPCAVLSPLCD.

Positions 1–25 (SDRASDGRNAAANDRASDLVALTVR) are excised as a propeptide. 2 disulfide bridges follow: Cys27-Cys33 and Cys28-Cys40.

The protein belongs to the conotoxin A superfamily. As to expression, expressed by the venom duct.

The protein localises to the secreted. This Conus bullatus (Bubble cone) protein is Conotoxin Bu22.